Here is a 242-residue protein sequence, read N- to C-terminus: Protein HTATIP2 (242 aa).

Ala-2 carries the N-acetylalanine modification. Residues 2 to 25 (AETEALSKLREDFRMQNKSVFILG) form a required for interaction with elongation factor EEF1A1 region. The NADPH site is built by Ser-27, Gly-28, Glu-29, Thr-30, Arg-52, Arg-53, Leu-92, Gly-93, Tyr-143, Lys-147, Leu-170, and Arg-178. Residue Tyr-143 is the Proton acceptor of the active site. Lys-147 is an active-site residue.

Monomer. Forms homodimers during oxidative stress. Interacts (via N-terminus) with elongation factor EEF1A1 (via middle-region); the interaction is direct and competes with EEF1A1 binding to guanyl-nucleotide exchange factor EEF1B2, thereby inhibiting GDP for GTP exchange and reactivation of EEF1A1. Interacts with nuclear transport receptors XPO4, IPO5/RANBP5, IPO7, IPO9 and KPNB1 as well as GCN1L1/GCN1 and LRPPRC probably through their HEAT repeats. Binds NCOA5/CIA.

It localises to the cytoplasm. In terms of biological role, represses translation by preventing reactivation of elongation factor eEF1A. May also inhibit nuclear import by competing with nuclear import substrates for binding to a subset of nuclear transport receptors. Has additionally been proposed to act as a redox sensor involved in cellular oxidative stress surveillance. In Pongo pygmaeus (Bornean orangutan), this protein is Protein HTATIP2 (HTATIP2).